The primary structure comprises 812 residues: INO80 complex subunit D (812 aa).

Disordered regions lie at residues 521–573 (NSRK…LCMP) and 581–600 (EVSS…ELPD). Residues 524-558 (KVQHHQQRKPRKKTKPPALTKKTKKKRRRGPRRPQ) are compositionally biased toward basic residues. Residues 585–595 (IRSPSTPNLST) are compositionally biased toward polar residues.

It belongs to the INO80D family. As to quaternary structure, component of the chromatin-remodeling INO80 complex.

The protein localises to the nucleus. Functionally, putative regulatory component of the chromatin remodeling INO80 complex which is involved in transcriptional regulation, DNA replication and probably DNA repair. This is INO80 complex subunit D from Xenopus laevis (African clawed frog).